The primary structure comprises 91 residues: Cell division topological specificity factor (91 aa).

This sequence belongs to the MinE family.

Its function is as follows. Prevents the cell division inhibition by proteins MinC and MinD at internal division sites while permitting inhibition at polar sites. This ensures cell division at the proper site by restricting the formation of a division septum at the midpoint of the long axis of the cell. This Thermoanaerobacter pseudethanolicus (strain ATCC 33223 / 39E) (Clostridium thermohydrosulfuricum) protein is Cell division topological specificity factor.